The chain runs to 132 residues: Small ribosomal subunit protein uS8 (132 aa).

It belongs to the universal ribosomal protein uS8 family. Part of the 30S ribosomal subunit. Contacts proteins S5 and S12.

One of the primary rRNA binding proteins, it binds directly to 16S rRNA central domain where it helps coordinate assembly of the platform of the 30S subunit. This is Small ribosomal subunit protein uS8 from Clostridium botulinum (strain Alaska E43 / Type E3).